The sequence spans 244 residues: Transmembrane protein 176A (244 aa).

Position 42 is a phosphoserine (Ser-42). 4 consecutive transmembrane segments (helical) span residues 60–80, 92–112, 122–142, and 204–224; these read VLVA…VLGG, SEGA…VAFL, ALMR…AIVI, and LLGI…VYIW.

This sequence belongs to the TMEM176 family. Interacts with MCOLN2. Specifically expressed in lung, kidney and spleen.

The protein resides in the membrane. In Mus musculus (Mouse), this protein is Transmembrane protein 176A (Tmem176a).